The following is a 137-amino-acid chain: MEQTLSIIKPDAVKKGVIGKIIDRFESNNLRICAMKKLQLTRCDAEAFYAIHKERPFFKDLVDFMISGPVVVMVLEGNNAVMKNRDLMGATNPKEAEAGTIRADFAQSIDANAVHGSDSLENAKNEIAFFFSTREIC.

ATP is bound by residues K9, F57, R85, T91, R102, and N112. The active-site Pros-phosphohistidine intermediate is H115.

It belongs to the NDK family. Homotetramer. Mg(2+) serves as cofactor.

The protein resides in the cytoplasm. The catalysed reaction is a 2'-deoxyribonucleoside 5'-diphosphate + ATP = a 2'-deoxyribonucleoside 5'-triphosphate + ADP. The enzyme catalyses a ribonucleoside 5'-diphosphate + ATP = a ribonucleoside 5'-triphosphate + ADP. Major role in the synthesis of nucleoside triphosphates other than ATP. The ATP gamma phosphate is transferred to the NDP beta phosphate via a ping-pong mechanism, using a phosphorylated active-site intermediate. The chain is Nucleoside diphosphate kinase from Helicobacter hepaticus (strain ATCC 51449 / 3B1).